Here is a 348-residue protein sequence, read N- to C-terminus: Phenylalanine--tRNA ligase alpha subunit (348 aa).

Glu262 is a binding site for Mg(2+).

This sequence belongs to the class-II aminoacyl-tRNA synthetase family. Phe-tRNA synthetase alpha subunit type 1 subfamily. As to quaternary structure, tetramer of two alpha and two beta subunits. The cofactor is Mg(2+).

Its subcellular location is the cytoplasm. The enzyme catalyses tRNA(Phe) + L-phenylalanine + ATP = L-phenylalanyl-tRNA(Phe) + AMP + diphosphate + H(+). In Streptococcus pneumoniae serotype 2 (strain D39 / NCTC 7466), this protein is Phenylalanine--tRNA ligase alpha subunit.